The primary structure comprises 88 residues: Sm-like protein LSM5 (88 aa).

An N-acetylalanine modification is found at Ala-2. The 76-residue stretch at 9-84 (LPSELIDRCI…IAILVPGGSP (76 aa)) folds into the Sm domain.

This sequence belongs to the snRNP Sm proteins family. As to quaternary structure, component of the heptameric LSM1-LSM7 complex that forms a seven-membered ring structure with a donut shape. The LSM subunits are arranged in the order LSM1, LSM2, LSM3, LSM6, LSM5, LSM7 and LSM4. Component of the heptameric LSM2-LSM8 complex that forms a seven-membered ring structure with a donut shape. The LSM subunits are arranged in the order LSM8, LSM2, LSM3, LSM6, LSM5, LSM7 and LSM4. LSM2 subunit interacts only with its two neighboring subunits, LSM6A or LSM6B and LSM7. Expressed in roots, leaves, stems, flowers and siliques.

Its subcellular location is the cytoplasm. The protein resides in the nucleus. Component of LSM protein complexes, which are involved in RNA processing. Component of the cytoplasmic LSM1-LSM7 complex which is involved in mRNA degradation by promoting decapping and leading to accurate 5'-3' mRNA decay. The cytoplasmic LSM1-LSM7 complex regulates developmental gene expression by the decapping of specific development-related transcripts. Component of the nuclear LSM2-LSM8 complex which is involved splicing nuclear mRNAs. LSM2-LSM8 binds directly to the U6 small nuclear RNAs (snRNAs) and is essential for accurate splicing of selected development-related mRNAs through the stabilization of the spliceosomal U6 snRNA. Plays a critical role in the regulation of development-related gene expression. Involved in the control of plant sensitivity to abscisic acid (ABA) and drought. Functions with ABH1 as negative regulator of ABA signaling in guard cells. Required for regulation of splicing efficiency of many stress-responsive genes under stress conditions. This Arabidopsis thaliana (Mouse-ear cress) protein is Sm-like protein LSM5.